Here is a 105-residue protein sequence, read N- to C-terminus: Large ribosomal subunit protein bL21 (105 aa).

Belongs to the bacterial ribosomal protein bL21 family. As to quaternary structure, part of the 50S ribosomal subunit. Contacts protein L20.

This protein binds to 23S rRNA in the presence of protein L20. The protein is Large ribosomal subunit protein bL21 of Natranaerobius thermophilus (strain ATCC BAA-1301 / DSM 18059 / JW/NM-WN-LF).